The sequence spans 992 residues: Sorting nexin-19 (992 aa).

The 178-residue stretch at Glu95–Arg272 folds into the PXA domain. Residues Ala410 to Asn442 form a disordered region. Over residues Ala418–Pro428 the composition is skewed to acidic residues. The 131-residue stretch at Leu533–Arg663 folds into the PX domain. Arg582 and Arg629 together coordinate a 1,2-diacyl-sn-glycero-3-phospho-(1D-myo-inositol-3-phosphate). Disordered regions lie at residues Phe692–Arg726, Gln778–Ser797, and Ala973–Ser992. Composition is skewed to basic and acidic residues over residues Thr709 to Lys719 and Ala782 to Val795. A compositionally biased stretch (polar residues) spans Asp980 to Ser992.

This sequence belongs to the sorting nexin family. Interacts with PTPRN.

The protein resides in the early endosome membrane. It localises to the cytoplasmic vesicle membrane. Its function is as follows. Plays a role in intracellular vesicle trafficking and exocytosis. May play a role in maintaining insulin-containing dense core vesicles in pancreatic beta-cells and in preventing their degradation. May play a role in insulin secretion. Interacts with membranes containing phosphatidylinositol 3-phosphate (PtdIns(3P)). In Homo sapiens (Human), this protein is Sorting nexin-19 (SNX19).